A 246-amino-acid chain; its full sequence is Lipoprotein-releasing system ATP-binding protein LolD 1 (246 aa).

An ABC transporter domain is found at 6–244 (LKLERIRKDL…ASVTNEAASL (239 aa)). Position 43–50 (43–50 (GPSGSGKS)) interacts with ATP.

It belongs to the ABC transporter superfamily. Lipoprotein translocase (TC 3.A.1.125) family. The complex is composed of two ATP-binding proteins (LolD) and two transmembrane proteins (LolC and LolE).

The protein localises to the cell inner membrane. Functionally, part of the ABC transporter complex LolCDE involved in the translocation of mature outer membrane-directed lipoproteins, from the inner membrane to the periplasmic chaperone, LolA. Responsible for the formation of the LolA-lipoprotein complex in an ATP-dependent manner. The chain is Lipoprotein-releasing system ATP-binding protein LolD 1 from Chlorobium chlorochromatii (strain CaD3).